The sequence spans 111 residues: Cryptic phage CTXphi transcriptional repressor RstR (111 aa).

In terms of domain architecture, HTH cro/C1-type spans Ile-6–Leu-60. The segment at residues Gln-17–Lys-36 is a DNA-binding region (H-T-H motif).

In terms of biological role, transcriptional repressor of the integrated CTXPhi phage gene rstA2. This chain is Cryptic phage CTXphi transcriptional repressor RstR (rstR), found in Vibrio cholerae.